The chain runs to 150 residues: Molybdopterin synthase catalytic subunit (150 aa).

Residues 37–39, 103–104, K119, and 126–128 each bind substrate; these read KVR, HR, and KRE. A Glycyl lysine isopeptide (Lys-Gly) (interchain with G-Cter in MoaD) cross-link involves residue K119.

This sequence belongs to the MoaE family. In terms of assembly, heterotetramer of 2 MoaD subunits and 2 MoaE subunits. Also stable as homodimer. The enzyme changes between these two forms during catalysis.

It catalyses the reaction 2 [molybdopterin-synthase sulfur-carrier protein]-C-terminal-Gly-aminoethanethioate + cyclic pyranopterin phosphate + H2O = molybdopterin + 2 [molybdopterin-synthase sulfur-carrier protein]-C-terminal Gly-Gly + 2 H(+). It participates in cofactor biosynthesis; molybdopterin biosynthesis. In terms of biological role, converts molybdopterin precursor Z to molybdopterin. This requires the incorporation of two sulfur atoms into precursor Z to generate a dithiolene group. The sulfur is provided by MoaD. In Escherichia coli (strain K12), this protein is Molybdopterin synthase catalytic subunit (moaE).